Reading from the N-terminus, the 1350-residue chain is MASTADFLLDDQTDEDFFDKLVDDSYTPTASSSAKELKFDDGSDSDDAKAFANLSVVDDVLGDGDVALNEAGLGNDVANEGTSGSVGKEEPSSSIAPEAVQFVNSDANRLRDVDVVRSEVDDMALTETGKESNIVDGSGSPGVKEVDWGSFYADSSVNDGGGFGSYSDFFTELDATAGNVQGQAEVAVATGGNLVANDTINTSVGLDNSAGFEQHQGQVQHDSGSGQYVDNSQSWENLYPGWKYDASTGQWYQVDGQDATVNSQESYINSTGNWESVAADNSDVAYLKQSTTSAMAGTAESVSTWNQVSQVGNGYPEHMVFDAQYPGWYYDTIAQEWRSLDSYNQASQTTVTGQAHDQQVQNGHARTTTYHNNSQSSVYDVNNKNQTFKAQDFAIQGQHGSWDESYYANNQQAGNTWQPVNVGKAEPAVTSDSLSRFGGNQQVNNLYSTESVAEQFKPNTIGAQSFIPQHMNVASATQNGPLSFSNDLYNRQQSVDHAQKSFQNNQLFSPSVGRSSDRRPPHALVSFGFGGKLIVMKDNNGSLQNTSFGSQGIGGSSITVLNLAEVISGSASYSSPGEDSLSYFRCLHQQSLPGPLVGGNVGSKELHKWIDERLLHCESSNMDFSRGKLLKMLLSLLRISCQYYGKLRSPFGSDASQKETDTPEAAVAKLFAFAKKDGIQNGYAPISQCLQHLPPESQMQVTASEVQNLLASGRKMEALQCAQEGHLWGPALVIAAQLGDQFYVDTVKQMALRQLIPGSPLRTLCLLVAGQPAEVCPTGSSSSMLDNWEENLGIITANRTTDDDLVIIHLGDSMWKERGEIIAAHICYLIADKNFDPYSESARLCLVGADHWKCPRTYASPDAIQRTELYEYSKTLGNSQYILLPFQPYKIIYAHMLAEVGKLSTAQKYCQAVIRCLKTSRSSEVEMWKQFASSLEERIRSHQEGGNLAPAKLVGKLLNSLWGMPPPAPHSTTGNPQVNEYQHQQQEAAKLSYSQSANTMSSLMPPASIEPVHEWGGNGRTMAAHSRSVSEPDFSRTPIQDQTDSSKDKAPDGVTQVKSTRKVPSSRFSRFGIGILKNTVGKVFPSRSSNEAKLGNENQFYYDDNLKRWVERGVEPPAEEAALPPPPTSVPFRSNSLGHENKSEIKNEMSPSSGSWSSGSPTPSENSPGIPPVSQGSNQFSARGRMGVRARYVDTYNQGSSSMYQSPPVQSSKPPIPAKAKFFVPAAPASFANDQVMESVSAETRQENSGDEAVVGSAGAPGPSQASFQSPTPSPIAMQRFPSVDNIRRSGSGTSLNGDLPQSVSRRTASWSGSVNSSSFMSPTSASTFRPSPLNSSSSSLGEELQEVEL.

5 disordered regions span residues 26–45 (YTPTASSSAKELKFDDGSDS), 73–97 (LGNDVANEGTSGSVGKEEPSSSIAP), 964–1063 (MPPP…TRKV), 1118–1216 (AEEA…KPPI), and 1235–1350 (QVME…EVEL). Residues 35–45 (KELKFDDGSDS) show a composition bias toward basic and acidic residues. S43 is subject to Phosphoserine. Polar residues predominate over residues 970–1002 (HSTTGNPQVNEYQHQQQEAAKLSYSQSANTMSS). Residues 1150 to 1168 (SPSSGSWSSGSPTPSENSP) show a composition bias toward low complexity. 2 stretches are compositionally biased toward polar residues: residues 1195–1210 (TYNQGSSSMYQSPPVQ) and 1289–1316 (RSGSGTSLNGDLPQSVSRRTASWSGSVN). Residues 1317–1343 (SSSFMSPTSASTFRPSPLNSSSSSLGE) are compositionally biased toward low complexity.

It belongs to the SEC16 family. In terms of assembly, interacts with SEC13A, SEC13B and SEC31A.

The protein localises to the golgi apparatus. The protein resides in the golgi stack. It is found in the endoplasmic reticulum. Functionally, required for efficient protein export from the endoplasmic reticulum (ER) to the Golgi by regulating COPII coat dynamics at the ER. Functions as a scaffold and regulator of COPII coat assembly at ER exit sites. This chain is Protein transport protein SEC16A homolog, found in Arabidopsis thaliana (Mouse-ear cress).